We begin with the raw amino-acid sequence, 139 residues long: ATP synthase epsilon chain (139 aa).

Belongs to the ATPase epsilon chain family. F-type ATPases have 2 components, CF(1) - the catalytic core - and CF(0) - the membrane proton channel. CF(1) has five subunits: alpha(3), beta(3), gamma(1), delta(1), epsilon(1). CF(0) has three main subunits: a, b and c.

It localises to the cell inner membrane. Its function is as follows. Produces ATP from ADP in the presence of a proton gradient across the membrane. This Escherichia coli O157:H7 protein is ATP synthase epsilon chain (atpC).